We begin with the raw amino-acid sequence, 473 residues long: Lactate utilization protein B (473 aa).

4Fe-4S ferredoxin-type domains lie at 302–332 (GSEF…GHSY) and 351–380 (YDDY…LHDL). Residues cysteine 311, cysteine 314, cysteine 317, cysteine 321, cysteine 364, cysteine 367, and cysteine 371 each coordinate [4Fe-4S] cluster.

Belongs to the LutB/YkgF family.

Functionally, is involved in L-lactate degradation and allows cells to grow with lactate as the sole carbon source. Has probably a role as an electron transporter during oxidation of L-lactate. In Bacillus cereus (strain G9842), this protein is Lactate utilization protein B.